A 132-amino-acid polypeptide reads, in one-letter code: 3-aminoacrylate deaminase RutC (132 aa).

This sequence belongs to the RutC family.

It catalyses the reaction (Z)-3-aminoacrylate + H2O + H(+) = 3-oxopropanoate + NH4(+). In terms of biological role, involved in pyrimidine catabolism. Catalyzes the deamination of 3-aminoacrylate to malonic semialdehyde, a reaction that can also occur spontaneously. RutC may facilitate the reaction and modulate the metabolic fitness, rather than catalyzing essential functions. The polypeptide is 3-aminoacrylate deaminase RutC (Cronobacter sakazakii (strain ATCC BAA-894) (Enterobacter sakazakii)).